The primary structure comprises 171 residues: MGLGVESKLGDSIVTTRLDHAVNWGRSYSLWPMAFGTACCGIEFMAVAGAKYDVSRFGAEVVRFSPRQADLLIVAGTISYKQAPILKKIYEQMCEPKWVISMGACACSGGFYDNYTTVQGIDEIIPVDEYVAGCPPRPEAVLDAIMRIQEKAKTESIIKDRVKEYKGFLDA.

Positions 39, 40, 105, and 134 each coordinate [4Fe-4S] cluster.

The protein belongs to the complex I 20 kDa subunit family. In terms of assembly, NDH-1 is composed of 14 different subunits. Subunits NuoB, C, D, E, F, and G constitute the peripheral sector of the complex. [4Fe-4S] cluster is required as a cofactor.

It localises to the cell inner membrane. It carries out the reaction a quinone + NADH + 5 H(+)(in) = a quinol + NAD(+) + 4 H(+)(out). Its function is as follows. NDH-1 shuttles electrons from NADH, via FMN and iron-sulfur (Fe-S) centers, to quinones in the respiratory chain. The immediate electron acceptor for the enzyme in this species is believed to be ubiquinone. Couples the redox reaction to proton translocation (for every two electrons transferred, four hydrogen ions are translocated across the cytoplasmic membrane), and thus conserves the redox energy in a proton gradient. This is NADH-quinone oxidoreductase subunit B from Aliarcobacter butzleri (strain RM4018) (Arcobacter butzleri).